The primary structure comprises 990 residues: Nucleotide-binding leucine-rich repeat (NLR)-like protein (990 aa).

The tract at residues 22 to 304 is purine nucleoside phosphorylase domain; sequence GWICAIPTEL…AVAAAYAKIL (283 aa). In terms of domain architecture, NB-ARC spans 334 to 563; that stretch reads REEHLRQVLT…TISNYLEVYE (230 aa). TPR repeat units follow at residues 732–765, 774–807, 816–849, 858–891, 900–933, and 942–975; these read RDLL…KKLA, IGSM…MKQV, LGSM…RKQA, LMSM…KQQT, LASM…RKQV, and LQSM…ATLD. Residues 965–990 are disordered; sequence QQQQQSQATLDEGRLSKPARKRRKKK. Residues 981-990 show a composition bias toward basic residues; the sequence is KPARKRRKKK.

The enzyme catalyses ATP + H2O = D-ribose 5-triphosphate + adenine. The catalysed reaction is dATP + H2O = 2-deoxyribose 5-triphosphate + adenine. Functionally, the N-terminal purine nucleoside phosphorylase (PNP) domain cleaves the N-glycosidic bond of ATP, and to a lesser extent dATP; has very weak activity on adenosine and deoxyadenosine and no activity on (d)ADP or (d)AMP. The polypeptide is Nucleotide-binding leucine-rich repeat (NLR)-like protein (Hyaloscypha variabilis (strain UAMH 11265 / GT02V1 / F) (Meliniomyces variabilis)).